A 452-amino-acid polypeptide reads, in one-letter code: Phosphoglucosamine mutase (452 aa).

Serine 103 functions as the Phosphoserine intermediate in the catalytic mechanism. Mg(2+) is bound by residues serine 103, aspartate 244, aspartate 246, and aspartate 248. Phosphoserine is present on serine 103.

It belongs to the phosphohexose mutase family. It depends on Mg(2+) as a cofactor. In terms of processing, activated by phosphorylation.

The enzyme catalyses alpha-D-glucosamine 1-phosphate = D-glucosamine 6-phosphate. Its function is as follows. Catalyzes the conversion of glucosamine-6-phosphate to glucosamine-1-phosphate. This is Phosphoglucosamine mutase from Fusobacterium nucleatum subsp. nucleatum (strain ATCC 25586 / DSM 15643 / BCRC 10681 / CIP 101130 / JCM 8532 / KCTC 2640 / LMG 13131 / VPI 4355).